The following is a 466-amino-acid chain: Cysteine--tRNA ligase (466 aa).

Residue cysteine 28 coordinates Zn(2+). The 'HIGH' region motif lies at 30-40 (PTVYNYIHIGN). Zn(2+)-binding residues include cysteine 208, histidine 233, and glutamate 237. A 'KMSKS' region motif is present at residues 265-269 (KMSKS). Lysine 268 provides a ligand contact to ATP.

It belongs to the class-I aminoacyl-tRNA synthetase family. In terms of assembly, monomer. The cofactor is Zn(2+).

Its subcellular location is the cytoplasm. The enzyme catalyses tRNA(Cys) + L-cysteine + ATP = L-cysteinyl-tRNA(Cys) + AMP + diphosphate. In Staphylococcus aureus (strain MSSA476), this protein is Cysteine--tRNA ligase.